A 324-amino-acid chain; its full sequence is MILFLNGRDLQSVGVTSTGLETLDGNVSVTLLQDTEFLSLFNTEVDTGFNIISPVRDRFLFENEWEDTSVQVRESSSSWASGNQDDWTVWSVLGNQSWGGTGSGQDNDSLGLLFENSSDSGGSDGFGGGGWLWSTVSHVIVVWQVSDSLFSNDSGFSHSGNGVDWVVTLGGFTRQHNTVSTIQDSVTDIGNFSSGWSWVVSHGFQHLGSTDNWLTSQVRLSNQFLLDSQDFWGWDFNTQVTSGNHNTVSDLQDFVEVVNTLLVFNLDNDLDVLTLFTQDFSDGQNIVGGSDERSEDHVDTVLDTESQIFLVLFRQSWQIDIGTW.

This is an uncharacterized protein from Saccharomyces cerevisiae (strain ATCC 204508 / S288c) (Baker's yeast).